The sequence spans 813 residues: Leucine--tRNA ligase (813 aa).

A 'HIGH' region motif is present at residues 40–51 (SYPSGSKLHAGH). Positions 572–576 (KMSKS) match the 'KMSKS' region motif. Lys575 is an ATP binding site.

It belongs to the class-I aminoacyl-tRNA synthetase family.

It is found in the cytoplasm. It carries out the reaction tRNA(Leu) + L-leucine + ATP = L-leucyl-tRNA(Leu) + AMP + diphosphate. The polypeptide is Leucine--tRNA ligase (Clostridium botulinum (strain Langeland / NCTC 10281 / Type F)).